The following is a 345-amino-acid chain: Tetraacyldisaccharide 4'-kinase (345 aa).

An ATP-binding site is contributed by Thr-61 to Thr-68.

This sequence belongs to the LpxK family.

The catalysed reaction is a lipid A disaccharide + ATP = a lipid IVA + ADP + H(+). The protein operates within glycolipid biosynthesis; lipid IV(A) biosynthesis; lipid IV(A) from (3R)-3-hydroxytetradecanoyl-[acyl-carrier-protein] and UDP-N-acetyl-alpha-D-glucosamine: step 6/6. Transfers the gamma-phosphate of ATP to the 4'-position of a tetraacyldisaccharide 1-phosphate intermediate (termed DS-1-P) to form tetraacyldisaccharide 1,4'-bis-phosphate (lipid IVA). This Xanthomonas euvesicatoria pv. vesicatoria (strain 85-10) (Xanthomonas campestris pv. vesicatoria) protein is Tetraacyldisaccharide 4'-kinase.